Consider the following 264-residue polypeptide: MDNYSSLRIGGKQFSSRLMVGTGKYKSTQDMVESLSNSDTEIITVAVRRIKNDQTGDNLLEKINWKKYWMLPNTAGCVNADEAVRIAMLGRELAKLSGQEENNFVKLEVIPDKKYLLPDPIETVKAAEVLIKKGFAVLPYINADPILAKRLEELGCSTVMPLGSPIGSGQGLLNLSNIAIIIENAKVPVIIDAGIGVPSEASQAMELGADGVLINSAIAQAKNPPLMAQAINYGVKAGRQAFLAGRIKKQDFAIASSPEKNISI.

Lys-106 functions as the Schiff-base intermediate with DXP in the catalytic mechanism. Residues Gly-167, 193–194 (AG), and 215–216 (NS) contribute to the 1-deoxy-D-xylulose 5-phosphate site.

The protein belongs to the ThiG family. Homotetramer. Forms heterodimers with either ThiH or ThiS.

Its subcellular location is the cytoplasm. The enzyme catalyses [ThiS sulfur-carrier protein]-C-terminal-Gly-aminoethanethioate + 2-iminoacetate + 1-deoxy-D-xylulose 5-phosphate = [ThiS sulfur-carrier protein]-C-terminal Gly-Gly + 2-[(2R,5Z)-2-carboxy-4-methylthiazol-5(2H)-ylidene]ethyl phosphate + 2 H2O + H(+). It participates in cofactor biosynthesis; thiamine diphosphate biosynthesis. Catalyzes the rearrangement of 1-deoxy-D-xylulose 5-phosphate (DXP) to produce the thiazole phosphate moiety of thiamine. Sulfur is provided by the thiocarboxylate moiety of the carrier protein ThiS. In vitro, sulfur can be provided by H(2)S. This chain is Thiazole synthase, found in Prochlorococcus marinus (strain MIT 9312).